Here is a 535-residue protein sequence, read N- to C-terminus: Dynein axonemal assembly factor 8 (535 aa).

Disordered stretches follow at residues Ala-112–Arg-215, Arg-228–Pro-267, Pro-344–Arg-380, Thr-395–Cys-444, and Ile-461–Leu-535. Residues Arg-125–Arg-139 show a composition bias toward basic and acidic residues. Polar residues predominate over residues Gly-166–Ser-175. Position 175 is a phosphoserine (Ser-175). The residue at position 362 (Ser-362) is a Phosphoserine. Residues Asp-415–Glu-424 are compositionally biased toward acidic residues. Polar residues predominate over residues Ser-435–Cys-444.

Its subcellular location is the dynein axonemal particle. The protein resides in the cytoplasm. In cyliated cells, dynein axonemal particle-specific protein required for deployment of ODA to the axoneme. Interacts with outer dynein arm (ODA) subunits. The protein is Dynein axonemal assembly factor 8 (DNAAF8) of Macaca fascicularis (Crab-eating macaque).